A 181-amino-acid polypeptide reads, in one-letter code: Squamosa promoter-binding-like protein 5 (181 aa).

Residues 1–10 are compositionally biased toward basic residues; it reads MEGQRTQRRG. Positions 1 to 58 are disordered; that stretch reads MEGQRTQRRGYLKDKATVSNLVEEEMENGMDGEEEDGGDEDKRKKVMERVRGPSTDRV. The segment covering 22 to 39 has biased composition (acidic residues); it reads VEEEMENGMDGEEEDGGD. A compositionally biased stretch (basic and acidic residues) spans 40–51; that stretch reads EDKRKKVMERVR. The SBP-type zinc finger occupies 60 to 137; sequence SRLCQVDRCT…AGHNERRRKI (78 aa). Zn(2+)-binding residues include Cys63, Cys68, Cys85, His88, Cys104, Cys107, His111, and Cys123. A Bipartite nuclear localization signal motif is present at residues 120-136; it reads KRSCRRRLAGHNERRRK. A disordered region spans residues 128–181; sequence AGHNERRRKISGDSFGEGSGRRGFSGQLIQTQERNRVDRKLPMTNSSFKRPQIR. Over residues 170 to 181 the composition is skewed to polar residues; that stretch reads MTNSSFKRPQIR.

It depends on Zn(2+) as a cofactor. As to expression, expressed in the inflorescence apical meristem and young flowers.

It is found in the nucleus. It localises to the cytoplasm. Its function is as follows. Trans-acting factor that binds specifically to the consensus nucleotide sequence 5'-TNCGTACAA-3' of AP1 promoter. Promotes both vegetative phase change and flowering. The polypeptide is Squamosa promoter-binding-like protein 5 (SPL5) (Arabidopsis thaliana (Mouse-ear cress)).